We begin with the raw amino-acid sequence, 364 residues long: Aminomethyltransferase (364 aa).

This sequence belongs to the GcvT family. As to quaternary structure, the glycine cleavage system is composed of four proteins: P, T, L and H.

It catalyses the reaction N(6)-[(R)-S(8)-aminomethyldihydrolipoyl]-L-lysyl-[protein] + (6S)-5,6,7,8-tetrahydrofolate = N(6)-[(R)-dihydrolipoyl]-L-lysyl-[protein] + (6R)-5,10-methylene-5,6,7,8-tetrahydrofolate + NH4(+). The glycine cleavage system catalyzes the degradation of glycine. This is Aminomethyltransferase from Shewanella piezotolerans (strain WP3 / JCM 13877).